Reading from the N-terminus, the 685-residue chain is ATP-dependent zinc metalloprotease FTSH 8, chloroplastic (685 aa).

A chloroplast-targeting transit peptide spans M1–K37. A thylakoid-targeting transit peptide spans A38–A73. The Lumenal, thylakoid portion of the chain corresponds to A38 to P161. The helical transmembrane segment at I162–L182 threads the bilayer. At S183–V685 the chain is on the stromal side. An ATP-binding site is contributed by G260–T267. H481 provides a ligand contact to Zn(2+). The active site involves E482. Zn(2+)-binding residues include H485 and D559.

It in the N-terminal section; belongs to the AAA ATPase family. This sequence in the C-terminal section; belongs to the peptidase M41 family. As to quaternary structure, heterohexamers with FTSH1, FTSH2 and FTSH5. May also form homooligomers. Zn(2+) is required as a cofactor. Expressed in cotyledons, cauline and rosette leaves, stems, sepals, flovers and siliques. Very low in roots.

Its subcellular location is the plastid. It localises to the chloroplast thylakoid membrane. Functionally, part of a complex that function as an ATP-dependent zinc metallopeptidase. Involved in the thylakoid formation and in the removal of damaged D1 in the photosystem II, preventing cell death under high-intensity light conditions. This Arabidopsis thaliana (Mouse-ear cress) protein is ATP-dependent zinc metalloprotease FTSH 8, chloroplastic (FTSH8).